The sequence spans 277 residues: Type II restriction enzyme EcoRI (277 aa).

Residues Asp91, Glu111, and Lys113 contribute to the active site. 2 residues coordinate Mg(2+): Asp91 and Glu111.

It belongs to the EcoRI type II restriction endonuclease family. Homodimer. Mg(2+) is required as a cofactor.

It carries out the reaction Endonucleolytic cleavage of DNA to give specific double-stranded fragments with terminal 5'-phosphates.. In terms of biological role, a P subtype restriction enzyme that recognizes the double-stranded sequence 5'-GAATTC-3' and cleaves after G-1. This chain is Type II restriction enzyme EcoRI (ecoRIR), found in Escherichia coli.